We begin with the raw amino-acid sequence, 82 residues long: Leucinostatins biosynthesis cluster protein M (82 aa).

The disordered stretch occupies residues 34–82 (ARNETHDPSGPRAPVSSMRLGPRSRPYHHGTARLRGSPNCSRDSSSAAT). Polar residues predominate over residues 71–82 (PNCSRDSSSAAT).

In terms of biological role, part of the gene cluster that mediates the biosynthesis of the lipopeptide antibiotics leucinostatins that show extensive biological activities, including antimalarial, antiviral, antibacterial, antifungal, and antitumor activities, as well as phytotoxic. The function of lcsM within the leucinostatins biosynthesis has not been identified yet. The chain is Leucinostatins biosynthesis cluster protein M from Purpureocillium lilacinum (Paecilomyces lilacinus).